The sequence spans 104 residues: Iron-sulfur cluster assembly protein CyaY (104 aa).

This sequence belongs to the frataxin family.

Involved in iron-sulfur (Fe-S) cluster assembly. May act as a regulator of Fe-S biogenesis. This Aliivibrio salmonicida (strain LFI1238) (Vibrio salmonicida (strain LFI1238)) protein is Iron-sulfur cluster assembly protein CyaY.